A 206-amino-acid polypeptide reads, in one-letter code: ATP phosphoribosyltransferase (206 aa).

Belongs to the ATP phosphoribosyltransferase family. Short subfamily. Heteromultimer composed of HisG and HisZ subunits.

Its subcellular location is the cytoplasm. It catalyses the reaction 1-(5-phospho-beta-D-ribosyl)-ATP + diphosphate = 5-phospho-alpha-D-ribose 1-diphosphate + ATP. It functions in the pathway amino-acid biosynthesis; L-histidine biosynthesis; L-histidine from 5-phospho-alpha-D-ribose 1-diphosphate: step 1/9. Catalyzes the condensation of ATP and 5-phosphoribose 1-diphosphate to form N'-(5'-phosphoribosyl)-ATP (PR-ATP). Has a crucial role in the pathway because the rate of histidine biosynthesis seems to be controlled primarily by regulation of HisG enzymatic activity. The polypeptide is ATP phosphoribosyltransferase (Campylobacter curvus (strain 525.92)).